Here is a 239-residue protein sequence, read N- to C-terminus: NAD(P)H-quinone oxidoreductase subunit K, chloroplastic (239 aa).

[4Fe-4S] cluster contacts are provided by Cys43, Cys44, Cys108, and Cys139. The disordered stretch occupies residues 217–239 (KSSVSSRELGNESGKEDVSIQNK). Residues 225–239 (LGNESGKEDVSIQNK) show a composition bias toward basic and acidic residues.

Belongs to the complex I 20 kDa subunit family. In terms of assembly, NDH is composed of at least 16 different subunits, 5 of which are encoded in the nucleus. [4Fe-4S] cluster is required as a cofactor.

The protein localises to the plastid. Its subcellular location is the chloroplast thylakoid membrane. It carries out the reaction a plastoquinone + NADH + (n+1) H(+)(in) = a plastoquinol + NAD(+) + n H(+)(out). It catalyses the reaction a plastoquinone + NADPH + (n+1) H(+)(in) = a plastoquinol + NADP(+) + n H(+)(out). NDH shuttles electrons from NAD(P)H:plastoquinone, via FMN and iron-sulfur (Fe-S) centers, to quinones in the photosynthetic chain and possibly in a chloroplast respiratory chain. The immediate electron acceptor for the enzyme in this species is believed to be plastoquinone. Couples the redox reaction to proton translocation, and thus conserves the redox energy in a proton gradient. This Acorus calamus var. americanus (American sweet flag) protein is NAD(P)H-quinone oxidoreductase subunit K, chloroplastic.